Reading from the N-terminus, the 55-residue chain is Protein CADMIUM TOLERANCE 2 (55 aa).

The helical transmembrane segment at 24 to 40 (GCLYACIFTALCCFCCY) threads the bilayer.

The protein belongs to the CYSTM1 family. As to expression, expressed only in roots.

It localises to the cell membrane. Its subcellular location is the secreted. It is found in the cell wall. In terms of biological role, confers resistance to heavy metal ions (e.g. cadmium (CdCl(2)) and copper (CuCl(2))) by chelating them at the plasma membrane of root cells, thus stopping their entry and reducing their accumulation. The polypeptide is Protein CADMIUM TOLERANCE 2 (Oryza sativa subsp. japonica (Rice)).